Here is a 532-residue protein sequence, read N- to C-terminus: Pentatricopeptide repeat-containing protein At4g02820, mitochondrial (532 aa).

The transit peptide at Met-1–Thr-28 directs the protein to the mitochondrion. Positions Pro-35–Val-56 are disordered. PPR repeat units follow at residues Gly-161–Lys-195, Ser-196–Arg-226, Asp-230–Pro-264, Asp-265–Leu-295, Asn-300–Ser-330, Asn-335–Val-365, Asp-370–Pro-404, Ser-405–Ser-435, Asn-442–Ala-472, and Asn-476–Thr-512.

It belongs to the PPR family. P subfamily.

The protein localises to the mitochondrion. This is Pentatricopeptide repeat-containing protein At4g02820, mitochondrial from Arabidopsis thaliana (Mouse-ear cress).